Here is a 245-residue protein sequence, read N- to C-terminus: UPF0246 protein CE1889 (245 aa).

Positions 1-20 are disordered; sequence MLILLPPSETKTPGGAGAPL.

This sequence belongs to the UPF0246 family.

In Corynebacterium efficiens (strain DSM 44549 / YS-314 / AJ 12310 / JCM 11189 / NBRC 100395), this protein is UPF0246 protein CE1889.